The chain runs to 104 residues: L-rhamnose mutarotase (104 aa).

Y18 lines the substrate pocket. The active-site Proton donor is the H22. Residues Y41 and 76-77 (WW) contribute to the substrate site.

It belongs to the rhamnose mutarotase family. Homodimer.

The protein resides in the cytoplasm. The enzyme catalyses alpha-L-rhamnose = beta-L-rhamnose. It functions in the pathway carbohydrate metabolism; L-rhamnose metabolism. Involved in the anomeric conversion of L-rhamnose. In Escherichia fergusonii (strain ATCC 35469 / DSM 13698 / CCUG 18766 / IAM 14443 / JCM 21226 / LMG 7866 / NBRC 102419 / NCTC 12128 / CDC 0568-73), this protein is L-rhamnose mutarotase.